A 41-amino-acid chain; its full sequence is MKVRNSLKSLRARHRDNRLVRRKGRVYVINKTQRRFKARQG.

This sequence belongs to the bacterial ribosomal protein bL36 family.

This Nitrobacter hamburgensis (strain DSM 10229 / NCIMB 13809 / X14) protein is Large ribosomal subunit protein bL36.